Consider the following 338-residue polypeptide: Glycerol-3-phosphate dehydrogenase [NAD(P)+] (338 aa).

NADPH is bound by residues Trp-11, Arg-30, and Lys-107. Lys-107, Gly-140, and Ser-142 together coordinate sn-glycerol 3-phosphate. NADPH is bound at residue Ala-144. Sn-glycerol 3-phosphate is bound by residues Lys-195, Asp-248, Ser-258, Arg-259, and Asn-260. The Proton acceptor role is filled by Lys-195. Arg-259 is an NADPH binding site. 2 residues coordinate NADPH: Val-283 and Glu-285.

This sequence belongs to the NAD-dependent glycerol-3-phosphate dehydrogenase family.

Its subcellular location is the cytoplasm. It catalyses the reaction sn-glycerol 3-phosphate + NAD(+) = dihydroxyacetone phosphate + NADH + H(+). The catalysed reaction is sn-glycerol 3-phosphate + NADP(+) = dihydroxyacetone phosphate + NADPH + H(+). It functions in the pathway membrane lipid metabolism; glycerophospholipid metabolism. Its function is as follows. Catalyzes the reduction of the glycolytic intermediate dihydroxyacetone phosphate (DHAP) to sn-glycerol 3-phosphate (G3P), the key precursor for phospholipid synthesis. In Ralstonia nicotianae (strain ATCC BAA-1114 / GMI1000) (Ralstonia solanacearum), this protein is Glycerol-3-phosphate dehydrogenase [NAD(P)+].